A 739-amino-acid polypeptide reads, in one-letter code: Phosphoribosylformylglycinamidine synthase subunit PurL (739 aa).

The active site involves His-54. ATP-binding residues include Tyr-57 and Lys-96. Mg(2+) is bound at residue Glu-98. Substrate is bound by residues 99–102 (SHNH) and Arg-121. Residue His-100 is the Proton acceptor of the active site. Residue Asp-122 coordinates Mg(2+). Gln-245 provides a ligand contact to substrate. Asp-273 provides a ligand contact to Mg(2+). Residue 317–319 (ESQ) coordinates substrate. Positions 500 and 537 each coordinate ATP. Asn-538 provides a ligand contact to Mg(2+). Substrate is bound at residue Ser-540.

This sequence belongs to the FGAMS family. In terms of assembly, monomer. Part of the FGAM synthase complex composed of 1 PurL, 1 PurQ and 2 PurS subunits.

Its subcellular location is the cytoplasm. It catalyses the reaction N(2)-formyl-N(1)-(5-phospho-beta-D-ribosyl)glycinamide + L-glutamine + ATP + H2O = 2-formamido-N(1)-(5-O-phospho-beta-D-ribosyl)acetamidine + L-glutamate + ADP + phosphate + H(+). The protein operates within purine metabolism; IMP biosynthesis via de novo pathway; 5-amino-1-(5-phospho-D-ribosyl)imidazole from N(2)-formyl-N(1)-(5-phospho-D-ribosyl)glycinamide: step 1/2. In terms of biological role, part of the phosphoribosylformylglycinamidine synthase complex involved in the purines biosynthetic pathway. Catalyzes the ATP-dependent conversion of formylglycinamide ribonucleotide (FGAR) and glutamine to yield formylglycinamidine ribonucleotide (FGAM) and glutamate. The FGAM synthase complex is composed of three subunits. PurQ produces an ammonia molecule by converting glutamine to glutamate. PurL transfers the ammonia molecule to FGAR to form FGAM in an ATP-dependent manner. PurS interacts with PurQ and PurL and is thought to assist in the transfer of the ammonia molecule from PurQ to PurL. The chain is Phosphoribosylformylglycinamidine synthase subunit PurL from Bacillus cereus (strain ATCC 10987 / NRS 248).